Reading from the N-terminus, the 102-residue chain is Small ribosomal subunit protein uS10 (102 aa).

The protein belongs to the universal ribosomal protein uS10 family. In terms of assembly, part of the 30S ribosomal subunit.

Functionally, involved in the binding of tRNA to the ribosomes. The protein is Small ribosomal subunit protein uS10 of Pelagibacter ubique (strain HTCC1062).